Reading from the N-terminus, the 181-residue chain is Avenin-like a6 (181 aa).

The N-terminal stretch at 1–19 (MKNLFILALLAFTATSAVA) is a signal peptide.

This sequence belongs to the prolamin family. Post-translationally, contains 7 disulfide bonds.

In terms of biological role, seed storage protein. Not integrated in the gluten polymer through disulfide bonds, unless incorporated by reduction and reoxidation during dough making. Increases dough strength and bread volume, but decreases dough stability when added into a base wheat flour. In Triticum aestivum (Wheat), this protein is Avenin-like a6.